Consider the following 282-residue polypeptide: Mitochondrial outer membrane protein porin (282 aa).

Belongs to the eukaryotic mitochondrial porin family.

The protein localises to the mitochondrion outer membrane. In terms of biological role, forms a channel through the cell membrane that allows diffusion of small hydrophilic molecules. The channel adopts an open conformation at low or zero membrane potential and a closed conformation at potentials above 30-40 mV. The open state has a weak anion selectivity whereas the closed state is cation-selective. This Candida albicans (strain SC5314 / ATCC MYA-2876) (Yeast) protein is Mitochondrial outer membrane protein porin (POR1).